Here is a 208-residue protein sequence, read N- to C-terminus: Large ribosomal subunit protein uL4 (208 aa).

The interval 45-85 (RQGTHKAKTRAQVRGGGRKPYRQKGTGNARQGSTRSPLMIG) is disordered. A compositionally biased stretch (basic residues) spans 46-66 (QGTHKAKTRAQVRGGGRKPYR). The segment covering 69-80 (GTGNARQGSTRS) has biased composition (polar residues).

Belongs to the universal ribosomal protein uL4 family. In terms of assembly, part of the 50S ribosomal subunit.

Its function is as follows. One of the primary rRNA binding proteins, this protein initially binds near the 5'-end of the 23S rRNA. It is important during the early stages of 50S assembly. It makes multiple contacts with different domains of the 23S rRNA in the assembled 50S subunit and ribosome. Forms part of the polypeptide exit tunnel. In Chlorobium phaeobacteroides (strain DSM 266 / SMG 266 / 2430), this protein is Large ribosomal subunit protein uL4.